A 211-amino-acid chain; its full sequence is Small ribosomal subunit protein uS4 (211 aa).

The tract at residues 27–48 is disordered; it reads GRKVLERRGSQPPGQHGASVRR. Residues 99–162 form the S4 RNA-binding domain; it reads RRLDNVVFRL…RKRDYFKDLE (64 aa).

This sequence belongs to the universal ribosomal protein uS4 family. Part of the 30S ribosomal subunit. Contacts protein S5. The interaction surface between S4 and S5 is involved in control of translational fidelity.

Functionally, one of the primary rRNA binding proteins, it binds directly to 16S rRNA where it nucleates assembly of the body of the 30S subunit. Its function is as follows. With S5 and S12 plays an important role in translational accuracy. This is Small ribosomal subunit protein uS4 from Herpetosiphon aurantiacus (strain ATCC 23779 / DSM 785 / 114-95).